Consider the following 132-residue polypeptide: Small ribosomal subunit protein uS8 (132 aa).

It belongs to the universal ribosomal protein uS8 family. In terms of assembly, part of the 30S ribosomal subunit. Contacts proteins S5 and S12.

One of the primary rRNA binding proteins, it binds directly to 16S rRNA central domain where it helps coordinate assembly of the platform of the 30S subunit. In Xanthomonas euvesicatoria pv. vesicatoria (strain 85-10) (Xanthomonas campestris pv. vesicatoria), this protein is Small ribosomal subunit protein uS8.